A 743-amino-acid polypeptide reads, in one-letter code: Protein STB5 (743 aa).

Residues 22-49 (CARCRKLKKKCGKQIPTCANCDKNGAHC) constitute a DNA-binding region (zn(2)-C6 fungal-type). 2 disordered regions span residues 81–100 (VGKSPLSTKSMPNSSSPLSA) and 155–249 (NSNP…YANN). Composition is skewed to polar residues over residues 85-99 (PLSTKSMPNSSSPLS) and 155-198 (NSNP…SPLI). Low complexity predominate over residues 213–238 (NNNRNTSNGDNGSNVNHDNNNGSTNT). The segment covering 239–249 (PQLSLTPYANN) has biased composition (polar residues).

It localises to the nucleus. Its function is as follows. Binds to SIN3. The sequence is that of Protein STB5 (STB5) from Saccharomyces cerevisiae (strain ATCC 204508 / S288c) (Baker's yeast).